The primary structure comprises 913 residues: DNA repair endonuclease XPF (913 aa).

The segment at 1 to 454 (MDRGISAVRK…EVWVNLRKGD (454 aa)) is helicase-like. 2 leucine-zipper regions span residues 233-254 (LNACLKELKCHNPSLEVEDLSL) and 270-298 (LDPLWHQLGAKTKSLVQDLKILRTLLQYL). An N6-acetyllysine modification is found at K289. The span at 453–476 (GDGPKRTMKSDKRPKDTKNKERAS) shows a compositional bias: basic and acidic residues. Disordered regions lie at residues 453–525 (GDGP…CGGE) and 638–677 (VVPEEREGRDETNLDLARGTVSTDAPADTRKAGGQEHNGT). Residues 483 to 488 (KRKKRE) carry the Nuclear localization signal motif. Over residues 500-509 (EPPEEGAAEE) the composition is skewed to acidic residues. S518 is modified (phosphoserine). A compositionally biased stretch (basic and acidic residues) spans 638–649 (VVPEEREGRDET). The interval 655 to 810 (RGTVSTDAPA…PSPHATAELF (156 aa)) is nuclease. Residues 680–760 (SIVVDMREFR…RPVLLIEFDA (81 aa)) form the ERCC4 domain. Residues 834 to 902 (TLPESDKYNP…QLYDFLHTAY (69 aa)) form a hhH2, dimerization with ERCC1 region.

The protein belongs to the XPF family. As to quaternary structure, heterodimer composed of ERCC1 and ERCC4/XPF. Interacts with SLX4/BTBD12; this interaction is direct and links the ERCC1-ERCC4/XPF complex to SLX4, which may coordinate the action of the structure-specific endonuclease during DNA repair. Mg(2+) serves as cofactor.

The protein localises to the nucleus. The protein resides in the chromosome. Its function is as follows. Catalytic component of a structure-specific DNA repair endonuclease responsible for the 5-prime incision during DNA repair, and which is essential for nucleotide excision repair (NER) and interstrand cross-link (ICL) repair. This Cricetulus griseus (Chinese hamster) protein is DNA repair endonuclease XPF.